The sequence spans 54 residues: Large ribosomal subunit protein bL33C (54 aa).

Belongs to the bacterial ribosomal protein bL33 family.

This Streptomyces griseus subsp. griseus (strain JCM 4626 / CBS 651.72 / NBRC 13350 / KCC S-0626 / ISP 5235) protein is Large ribosomal subunit protein bL33C.